A 118-amino-acid polypeptide reads, in one-letter code: NAD(P)H-quinone oxidoreductase subunit M (118 aa).

Belongs to the complex I NdhM subunit family. As to quaternary structure, NDH-1 can be composed of about 15 different subunits; different subcomplexes with different compositions have been identified which probably have different functions.

Its subcellular location is the cellular thylakoid membrane. It carries out the reaction a plastoquinone + NADH + (n+1) H(+)(in) = a plastoquinol + NAD(+) + n H(+)(out). The catalysed reaction is a plastoquinone + NADPH + (n+1) H(+)(in) = a plastoquinol + NADP(+) + n H(+)(out). In terms of biological role, NDH-1 shuttles electrons from an unknown electron donor, via FMN and iron-sulfur (Fe-S) centers, to quinones in the respiratory and/or the photosynthetic chain. The immediate electron acceptor for the enzyme in this species is believed to be plastoquinone. Couples the redox reaction to proton translocation, and thus conserves the redox energy in a proton gradient. Cyanobacterial NDH-1 also plays a role in inorganic carbon-concentration. This Rippkaea orientalis (strain PCC 8801 / RF-1) (Cyanothece sp. (strain PCC 8801)) protein is NAD(P)H-quinone oxidoreductase subunit M.